The primary structure comprises 236 residues: 2,3,4,5-tetrahydropyridine-2,6-dicarboxylate N-acetyltransferase (236 aa).

It belongs to the transferase hexapeptide repeat family. DapH subfamily.

It carries out the reaction (S)-2,3,4,5-tetrahydrodipicolinate + acetyl-CoA + H2O = L-2-acetamido-6-oxoheptanedioate + CoA. It participates in amino-acid biosynthesis; L-lysine biosynthesis via DAP pathway; LL-2,6-diaminopimelate from (S)-tetrahydrodipicolinate (acetylase route): step 1/3. Catalyzes the transfer of an acetyl group from acetyl-CoA to tetrahydrodipicolinate. The sequence is that of 2,3,4,5-tetrahydropyridine-2,6-dicarboxylate N-acetyltransferase from Geobacillus thermodenitrificans (strain NG80-2).